Consider the following 656-residue polypeptide: DNA ligase (656 aa).

Residues 32-36 (DAVYD) and 81-82 (SL) contribute to the NAD(+) site. Lys-112 (N6-AMP-lysine intermediate) is an active-site residue. 3 residues coordinate NAD(+): Arg-133, Glu-167, and Lys-306. 4 residues coordinate Zn(2+): Cys-400, Cys-403, Cys-416, and Cys-421. In terms of domain architecture, BRCT spans 577-656 (KSSSVFNNKT…ELLKRLKELD (80 aa)).

This sequence belongs to the NAD-dependent DNA ligase family. LigA subfamily. Mg(2+) serves as cofactor. Requires Mn(2+) as cofactor.

The catalysed reaction is NAD(+) + (deoxyribonucleotide)n-3'-hydroxyl + 5'-phospho-(deoxyribonucleotide)m = (deoxyribonucleotide)n+m + AMP + beta-nicotinamide D-nucleotide.. In terms of biological role, DNA ligase that catalyzes the formation of phosphodiester linkages between 5'-phosphoryl and 3'-hydroxyl groups in double-stranded DNA using NAD as a coenzyme and as the energy source for the reaction. It is essential for DNA replication and repair of damaged DNA. This is DNA ligase from Helicobacter pylori (strain HPAG1).